Consider the following 271-residue polypeptide: Type III pantothenate kinase (271 aa).

6 to 13 (DVRNTHTV) provides a ligand contact to ATP. 109 to 112 (GADR) lines the substrate pocket. Asp-111 serves as the catalytic Proton acceptor. K(+) is bound at residue Asp-131. Ser-134 is an ATP binding site. Thr-186 is a binding site for substrate.

Belongs to the type III pantothenate kinase family. Homodimer. The cofactor is NH4(+). K(+) is required as a cofactor.

It is found in the cytoplasm. It carries out the reaction (R)-pantothenate + ATP = (R)-4'-phosphopantothenate + ADP + H(+). The protein operates within cofactor biosynthesis; coenzyme A biosynthesis; CoA from (R)-pantothenate: step 1/5. Functionally, catalyzes the phosphorylation of pantothenate (Pan), the first step in CoA biosynthesis. This is Type III pantothenate kinase from Mycobacterium avium (strain 104).